The primary structure comprises 205 residues: Holliday junction branch migration complex subunit RuvA (205 aa).

The tract at residues 1–68 is domain I; the sequence is MIGYLEGTLL…QPKPVLIGFN (68 aa). Residues 69–146 are domain II; sequence TEEEKDFFHL…RFADAGHSSA (78 aa). Residues 147-151 form a flexible linker region; that stretch reads PDVPV. The interval 152–205 is domain III; the sequence is TGSLADQTVEVLVGQLGYKPNEARLMVAGALKRNPDVSTPEALFDEIFKHGQAQ.

The protein belongs to the RuvA family. Homotetramer. Forms an RuvA(8)-RuvB(12)-Holliday junction (HJ) complex. HJ DNA is sandwiched between 2 RuvA tetramers; dsDNA enters through RuvA and exits via RuvB. An RuvB hexamer assembles on each DNA strand where it exits the tetramer. Each RuvB hexamer is contacted by two RuvA subunits (via domain III) on 2 adjacent RuvB subunits; this complex drives branch migration. In the full resolvosome a probable DNA-RuvA(4)-RuvB(12)-RuvC(2) complex forms which resolves the HJ.

It is found in the cytoplasm. The RuvA-RuvB-RuvC complex processes Holliday junction (HJ) DNA during genetic recombination and DNA repair, while the RuvA-RuvB complex plays an important role in the rescue of blocked DNA replication forks via replication fork reversal (RFR). RuvA specifically binds to HJ cruciform DNA, conferring on it an open structure. The RuvB hexamer acts as an ATP-dependent pump, pulling dsDNA into and through the RuvAB complex. HJ branch migration allows RuvC to scan DNA until it finds its consensus sequence, where it cleaves and resolves the cruciform DNA. The protein is Holliday junction branch migration complex subunit RuvA of Desulfosudis oleivorans (strain DSM 6200 / JCM 39069 / Hxd3) (Desulfococcus oleovorans).